Consider the following 527-residue polypeptide: Light-independent protochlorophyllide reductase subunit B (527 aa).

Aspartate 36 lines the [4Fe-4S] cluster pocket. Residue aspartate 292 is the Proton donor of the active site. 428–429 is a substrate binding site; sequence GL.

The protein belongs to the ChlB/BchB/BchZ family. In terms of assembly, protochlorophyllide reductase is composed of three subunits; BchL, BchN and BchB. Forms a heterotetramer of two BchB and two BchN subunits. [4Fe-4S] cluster serves as cofactor.

It catalyses the reaction chlorophyllide a + oxidized 2[4Fe-4S]-[ferredoxin] + 2 ADP + 2 phosphate = protochlorophyllide a + reduced 2[4Fe-4S]-[ferredoxin] + 2 ATP + 2 H2O. Its pathway is porphyrin-containing compound metabolism; bacteriochlorophyll biosynthesis (light-independent). Component of the dark-operative protochlorophyllide reductase (DPOR) that uses Mg-ATP and reduced ferredoxin to reduce ring D of protochlorophyllide (Pchlide) to form chlorophyllide a (Chlide). This reaction is light-independent. The NB-protein (BchN-BchB) is the catalytic component of the complex. The chain is Light-independent protochlorophyllide reductase subunit B from Chlorobium phaeovibrioides (strain DSM 265 / 1930) (Prosthecochloris vibrioformis (strain DSM 265)).